Consider the following 42-residue polypeptide: Thymosin beta-10 (42 aa).

Basic and acidic residues-rich tracts occupy residues 1–25 (MADK…ETQE) and 33–42 (ETIEQEKQAK). A disordered region spans residues 1–42 (MADKPDMGEINSFDKAKLKKTETQEKNTLPTKETIEQEKQAK). Ala2 is subject to N-acetylalanine. Lys4 bears the N6-acetyllysine mark. A Phosphoserine modification is found at Ser12. Lys15 bears the N6-acetyllysine mark. 3 positions are modified to phosphothreonine: Thr21, Thr23, and Thr34. Lys39 carries the N6-acetyllysine modification.

It belongs to the thymosin beta family.

It localises to the cytoplasm. It is found in the cytoskeleton. Plays an important role in the organization of the cytoskeleton. Binds to and sequesters actin monomers (G actin) and therefore inhibits actin polymerization. The chain is Thymosin beta-10 (TMSB10) from Sus scrofa (Pig).